The sequence spans 458 residues: Argininosuccinate lyase (458 aa).

Belongs to the lyase 1 family. Argininosuccinate lyase subfamily.

The protein localises to the cytoplasm. It carries out the reaction 2-(N(omega)-L-arginino)succinate = fumarate + L-arginine. Its pathway is amino-acid biosynthesis; L-arginine biosynthesis; L-arginine from L-ornithine and carbamoyl phosphate: step 3/3. This chain is Argininosuccinate lyase, found in Neisseria meningitidis serogroup C (strain 053442).